The following is a 316-amino-acid chain: NAC domain-containing protein 2 (316 aa).

Positions 17 to 170 (LPPGFRFHPT…DWVLCRLYNK (154 aa)) constitute an NAC domain. A DNA-binding region spans residues 114–176 (LGIKKALVFY…LYNKKNEWEK (63 aa)). Residues 185–210 (EEASDMVTSQSHSHTHSWGETRTPES) form a disordered region. The segment covering 190–200 (MVTSQSHSHTH) has biased composition (polar residues).

Forms homodimer. Interacts with NAC071. Expressed in roots and stamens.

The protein localises to the nucleus. Transcription factor that possesses transactivation activity. Transcription activator involved in response to abiotic stresses. Plays a positive role during dehydration and salt stress. Binds specifically to the 5'-CATGTG-3' motif found in promoters of stress-responsive genes. This is NAC domain-containing protein 2 from Oryza sativa subsp. japonica (Rice).